A 76-amino-acid chain; its full sequence is Putative defensin-like protein 121 (76 aa).

An N-terminal signal peptide occupies residues 1–26 (MTYKATILAIFMIILVLGIGTKETRG). Cystine bridges form between C30/C74, C39/C59, C44/C68, and C48/C70.

It belongs to the DEFL family.

It is found in the secreted. This Arabidopsis thaliana (Mouse-ear cress) protein is Putative defensin-like protein 121 (LCR55).